The following is a 362-amino-acid chain: Snurportin-1 (362 aa).

Methionine 1 is modified (N-acetylmethionine). 2 disordered regions span residues 1–40 (MEEL…SLEQ) and 69–90 (DWTG…MDVD). The segment at 1–65 (MEELSQALAG…LDYVNHARRL (65 aa)) is necessary for interaction with KPNB1 and m3G-cap U1 and U5 snRNP import receptor activity. The interval 1–160 (MEELSQALAG…NTFPSLLPGG (160 aa)) is necessary for interaction with XPO1. The 63-residue stretch at 11-73 (SFSVSQDLNS…RLAEDDWTGM (63 aa)) folds into the IBB domain. Residues 12–22 (FSVSQDLNSTA) show a composition bias toward polar residues. Acidic residues predominate over residues 69-89 (DWTGMESEEEEEKKDDEEMDV). Phosphoserine is present on serine 75. Residues 128-130 (GKR) are interaction with m3G-cap structure. The segment at 210–330 (LHSKLPEEEG…GIMGKLTPRA (121 aa)) is necessary for binding to the m3G-cap structure. Residues 319–362 (KEGIMGKLTPRASENGHYELEHLSTPKLKSPPQRPNHPESLMEN) form a disordered region. The segment covering 332-342 (ENGHYELEHLS) has biased composition (basic and acidic residues).

Belongs to the snurportin family. As to quaternary structure, component of an import snRNP complex composed of KPNB1, SNUPN, SMN1 and ZNF259. Component of a nuclear export receptor complex composed of KPNB1, Ran, SNUPN and XPO1. Found in a trimeric export complex with SNUPN, Ran and XPO1. Interacts (via IBB domain) with KPNB1; the interaction is direct. Interacts with DDX20, IPO7, SMN1, SNRPB and XPO1. Interacts directly with XPO1. Its interaction with XPO1 and binding to m3G-cap U snRNPs appears to be mutually exclusive. Can form homomers.

It localises to the nucleus. Its subcellular location is the cytoplasm. Functionally, functions as an U snRNP-specific nuclear import adapter. Involved in the trimethylguanosine (m3G)-cap-dependent nuclear import of U snRNPs. Binds specifically to the terminal m3G-cap U snRNAs. The polypeptide is Snurportin-1 (SNUPN) (Bos taurus (Bovine)).